The chain runs to 577 residues: uncharacterized protein (577 aa).

2 stretches are compositionally biased toward polar residues: residues 1 to 21 (MSST…QSAS) and 68 to 87 (SFQN…SKTE). 2 disordered regions span residues 1-24 (MSST…SAHP) and 68-93 (SFQN…PDDV). 12 helical membrane-spanning segments follow: residues 139–159 (CILA…AVPA), 174–194 (LLTM…WAPL), 204–224 (ILIG…GKDI), 232–252 (FFAG…LADM), 262–282 (ITLF…VGGF), 292–312 (WTEY…YLFC), 367–387 (PICF…YLLL), 402–422 (MGVA…GSGI), 447–467 (LPPM…LSWS), 473–493 (VNWV…LLIF), 504–526 (YLFR…AAGF), and 543–563 (GSLL…FFFF).

Belongs to the major facilitator superfamily. CAR1 family.

It is found in the endoplasmic reticulum. Its subcellular location is the membrane. This is an uncharacterized protein from Schizosaccharomyces pombe (strain 972 / ATCC 24843) (Fission yeast).